A 124-amino-acid polypeptide reads, in one-letter code: Putative membrane protein insertion efficiency factor (124 aa).

It belongs to the UPF0161 family.

The protein resides in the cell inner membrane. Could be involved in insertion of integral membrane proteins into the membrane. This Psychrobacter cryohalolentis (strain ATCC BAA-1226 / DSM 17306 / VKM B-2378 / K5) protein is Putative membrane protein insertion efficiency factor.